The following is a 369-amino-acid chain: uncharacterized protein (369 aa).

A run of 9 helical transmembrane segments spans residues 25-45 (QFVA…WYDW), 47-67 (FCLL…FVPA), 119-139 (LNIV…FNLM), 152-172 (LSGF…FSAL), 206-226 (HALN…LLFV), 235-255 (LKPL…SLYL), 272-292 (PIAL…GVFG), 296-316 (FGIY…TVFL), and 323-343 (LIFF…FTVA).

The protein to B.subtilis ComEC.

The protein localises to the cell membrane. This is an uncharacterized protein from Mycoplasma genitalium (strain ATCC 33530 / DSM 19775 / NCTC 10195 / G37) (Mycoplasmoides genitalium).